The primary structure comprises 465 residues: Uronate isomerase (465 aa).

This sequence belongs to the metallo-dependent hydrolases superfamily. Uronate isomerase family.

The catalysed reaction is D-glucuronate = D-fructuronate. It carries out the reaction aldehydo-D-galacturonate = keto-D-tagaturonate. It functions in the pathway carbohydrate metabolism; pentose and glucuronate interconversion. This is Uronate isomerase from Streptococcus equi subsp. equi (strain 4047).